Consider the following 417-residue polypeptide: Adenylosuccinate synthetase (417 aa).

GTP is bound by residues 11 to 17 (GDEGKGK) and 39 to 41 (GHT). D12 (proton acceptor) is an active-site residue. Mg(2+) is bound by residues D12 and G39. Residues 12–15 (DEGK), 37–40 (NAGH), T126, R140, Q218, T233, and R295 contribute to the IMP site. Residue H40 is the Proton donor of the active site. 291–297 (TVSGRIR) contributes to the substrate binding site. GTP contacts are provided by residues R297, 323–325 (KLD), and 406–408 (SNG).

The protein belongs to the adenylosuccinate synthetase family. Homodimer. Mg(2+) serves as cofactor.

It is found in the cytoplasm. It catalyses the reaction IMP + L-aspartate + GTP = N(6)-(1,2-dicarboxyethyl)-AMP + GDP + phosphate + 2 H(+). It functions in the pathway purine metabolism; AMP biosynthesis via de novo pathway; AMP from IMP: step 1/2. Functionally, plays an important role in the de novo pathway of purine nucleotide biosynthesis. Catalyzes the first committed step in the biosynthesis of AMP from IMP. This chain is Adenylosuccinate synthetase, found in Neorickettsia sennetsu (strain ATCC VR-367 / Miyayama) (Ehrlichia sennetsu).